The following is a 138-amino-acid chain: MKSFVLATCLLGFAQIIYADTEKLKILRKDIAKCARTLPKCVNQPDDPLARVDVWHCALAKSGVFDDPDPAAIKKKYKKFCAIAVTDPANVENCKKVTSRCVDKETQCSKSNRQKAINIAACILRSGVTETTVLAREK.

Residues 1–19 form the signal peptide; it reads MKSFVLATCLLGFAQIIYA.

Belongs to the ant venom allergen 2/4 family. In terms of assembly, homodimer; disulfide-linked. Expressed by the venom gland.

Its subcellular location is the secreted. The sequence is that of Venom allergen 2 from Solenopsis saevissima (Fire ant).